The chain runs to 592 residues: Monocopper oxidase-like protein SKS2 (592 aa).

Residues 1-23 (MAATDFFFAFVFSFALIFGFSFA) form the signal peptide. Residues Asn-61, Asn-110, Asn-172, Asn-203, Asn-259, Asn-280, Asn-295, Asn-344, Asn-364, Asn-433, and Asn-447 are each glycosylated (N-linked (GlcNAc...) asparagine). His-455 contacts Cu cation. Asn-476 and Asn-536 each carry an N-linked (GlcNAc...) asparagine glycan. Ser-564 is lipidated: GPI-anchor amidated serine. A propeptide spans 565–592 (ATKSMTNGQLILIFSMMMVLLSSFSSFC) (removed in mature form).

Belongs to the multicopper oxidase family. It depends on Cu cation as a cofactor.

It is found in the cell membrane. The polypeptide is Monocopper oxidase-like protein SKS2 (SKS2) (Arabidopsis thaliana (Mouse-ear cress)).